The primary structure comprises 833 residues: Serine-rich coiled-coil domain-containing protein 2 (833 aa).

The disordered stretch occupies residues 178–208 (NRSSGNVQKPRVNSCASRSSSGESLAQSPDN). The segment covering 191 to 208 (SCASRSSSGESLAQSPDN) has biased composition (polar residues). Ser222 bears the Phosphoserine mark. Disordered stretches follow at residues 321–345 (LLKSSRPPFSGPMTVDSNKNPPADM), 424–452 (NRTRITPEEMTLKEEKHESRPSKDIFDSP), 478–508 (KHTSGNNLISPDTDYRAGSSFELSPSDSSDG), and 602–631 (DHYHLSHPGHYHHHGQSDLSRGSPYRESPL). Ser451 carries the post-translational modification Phosphoserine. Residues 496 to 506 (SSFELSPSDSS) show a composition bias toward low complexity. A compositionally biased stretch (basic residues) spans 606 to 615 (LSHPGHYHHH). Residues 711–747 (DQIYKNEDLLNEITQLKEEIKKKDEKIQLLEQQLATR) adopt a coiled-coil conformation. The disordered stretch occupies residues 789–833 (FQGMPRTVPPHRRQTSSTTAFQQPSQIYRPRPGKTNKATTYRGPQ). Polar residues predominate over residues 803–814 (TSSTTAFQQPSQ).

This sequence belongs to the CCSER family. Expressed in brain (at protein level).

It localises to the cytoplasm. The protein localises to the cytoskeleton. Functionally, microtubule-binding protein which might play a role in microtubule bundling. The sequence is that of Serine-rich coiled-coil domain-containing protein 2 (Ccser2) from Mus musculus (Mouse).